The chain runs to 119 residues: Chorion class CA protein ERA.1 (119 aa).

The signal sequence occupies residues 1–21 (MSTFAVLLLCVQACLIQNVYS). The segment at 22–55 (QCLGRVGPGGPPLGPYGGPLGGPGYGPVGYGGCG) is left arm. Residues 56–103 (GYGGSGIGNVAVAGELPVAGSTGVMGQVPVIGAVEFAGPACAVGSVSI) are central domain. Residues 104 to 119 (SGACGPTCGCGGSPYY) form a right arm region.

The protein belongs to the chorion protein family.

Its function is as follows. This protein is one of many from the eggshell of the silk moth. This chain is Chorion class CA protein ERA.1 (ERA.1), found in Bombyx mori (Silk moth).